Here is a 471-residue protein sequence, read N- to C-terminus: Adenosylhomocysteinase (471 aa).

Substrate contacts are provided by Thr60, Asp135, and Glu196. 197–199 (TTT) contacts NAD(+). Lys226 and Asp230 together coordinate substrate. Residues Asn231, 260–265 (GYGDVG), Glu283, Asn318, 339–341 (IGH), and Asn387 each bind NAD(+).

It belongs to the adenosylhomocysteinase family. NAD(+) serves as cofactor.

Its subcellular location is the cytoplasm. It carries out the reaction S-adenosyl-L-homocysteine + H2O = L-homocysteine + adenosine. It participates in amino-acid biosynthesis; L-homocysteine biosynthesis; L-homocysteine from S-adenosyl-L-homocysteine: step 1/1. Functionally, may play a key role in the regulation of the intracellular concentration of adenosylhomocysteine. This chain is Adenosylhomocysteinase, found in Chlorobium phaeovibrioides (strain DSM 265 / 1930) (Prosthecochloris vibrioformis (strain DSM 265)).